We begin with the raw amino-acid sequence, 507 residues long: Maturase K (507 aa).

Belongs to the intron maturase 2 family. MatK subfamily.

Its subcellular location is the plastid. It is found in the chloroplast. Functionally, usually encoded in the trnK tRNA gene intron. Probably assists in splicing its own and other chloroplast group II introns. The protein is Maturase K of Liriodendron chinense (Chinese tulip tree).